Here is a 231-residue protein sequence, read N- to C-terminus: Trypsin (231 aa).

Residues 1–8 (FPTDDDDK) constitute a propeptide, activation peptide. One can recognise a Peptidase S1 domain in the interval 9 to 229 (IVGGYTCAAN…YVNWIQQTIA (221 aa)). 6 disulfides stabilise this stretch: Cys15-Cys145, Cys33-Cys49, Cys117-Cys218, Cys124-Cys191, Cys156-Cys170, and Cys181-Cys205. His48 functions as the Charge relay system in the catalytic mechanism. Residues Glu60, Asn62, Val65, and Glu70 each coordinate Ca(2+). Asp92 (charge relay system) is an active-site residue. Ser185 functions as the Charge relay system in the catalytic mechanism.

It belongs to the peptidase S1 family. Ca(2+) serves as cofactor.

The protein resides in the secreted. The protein localises to the extracellular space. It carries out the reaction Preferential cleavage: Arg-|-Xaa, Lys-|-Xaa.. In Sus scrofa (Pig), this protein is Trypsin.